The primary structure comprises 56 residues: Large ribosomal subunit protein bL32 (56 aa).

The protein belongs to the bacterial ribosomal protein bL32 family.

The protein is Large ribosomal subunit protein bL32 of Prochlorococcus marinus (strain MIT 9215).